The following is a 298-amino-acid chain: Cyclin-C (298 aa).

In terms of domain architecture, Cyclin N-terminal spans 46 to 162 (NFITAVATEC…ILDCCLVVHH (117 aa)). The segment at 278 to 298 (KLPKPNTPIPPPQQQQSSYHM) is disordered.

The protein belongs to the cyclin family. Cyclin C subfamily. In terms of assembly, component of the Mediator complex.

The protein localises to the nucleus. Component of the Mediator complex, a coactivator involved in regulated gene transcription of nearly all RNA polymerase II-dependent genes. Mediator functions as a bridge to convey information from gene-specific regulatory proteins to the basal RNA polymerase II transcription machinery. Mediator is recruited to promoters by direct interactions with regulatory proteins and serves as a scaffold for the assembly of a functional preinitiation complex with RNA polymerase II and the general transcription factors. Binds to and activates cyclin-dependent kinase cdk-8 that phosphorylates the CTD (C-terminal domain) of the large subunit of RNA polymerase II (RNAp II), which may inhibit the formation of a transcription initiation complex. The polypeptide is Cyclin-C (cic-1) (Caenorhabditis briggsae).